We begin with the raw amino-acid sequence, 49 residues long: Small, acid-soluble spore protein O (49 aa).

Residues 1-49 (MGKRKANHTISGMNAASAQGQGAGYNEEFANENLTAAERQNNKKRKKNQ) form a disordered region. Over residues 8-20 (HTISGMNAASAQG) the composition is skewed to polar residues.

Belongs to the SspO family.

Its subcellular location is the spore core. The polypeptide is Small, acid-soluble spore protein O (Bacillus cereus (strain AH187)).